Here is a 245-residue protein sequence, read N- to C-terminus: SPX domain-containing protein 3 (245 aa).

The region spanning 1–142 is the SPX domain; it reads MKFGKRIKEQ…RGGLRSPFIQ (142 aa).

Its function is as follows. Plays a positive role in plant adaptation to phosphate starvation and exerts negative feedback regulation of SPX1. This chain is SPX domain-containing protein 3 (SPX3), found in Arabidopsis thaliana (Mouse-ear cress).